Consider the following 186-residue polypeptide: Elongation factor P (186 aa).

Belongs to the elongation factor P family.

It is found in the cytoplasm. Its pathway is protein biosynthesis; polypeptide chain elongation. Functionally, involved in peptide bond synthesis. Stimulates efficient translation and peptide-bond synthesis on native or reconstituted 70S ribosomes in vitro. Probably functions indirectly by altering the affinity of the ribosome for aminoacyl-tRNA, thus increasing their reactivity as acceptors for peptidyl transferase. This chain is Elongation factor P, found in Ruminiclostridium cellulolyticum (strain ATCC 35319 / DSM 5812 / JCM 6584 / H10) (Clostridium cellulolyticum).